The following is a 450-amino-acid chain: Zinc finger protein 446 (450 aa).

One can recognise an SCAN box domain in the interval 26-108 (RLRFRGFCYQ…ALVEGLQHDP (83 aa)). Residue lysine 130 forms a Glycyl lysine isopeptide (Lys-Gly) (interchain with G-Cter in SUMO2) linkage. Disordered stretches follow at residues 130-155 (KTEEPLGSPHPSGTVESPGEGPQDTR) and 168-205 (EEPNVDGQEVAPSSPPLAAQSPEGNHGHQEPASTSFHP). Serine 137 is modified (phosphoserine). The KRAB domain occupies 208–254 (IQEEWGLLDRSQKELYWDAMLEKYGTVVSLGLPPHQPEAQAQSELGM). Residue serine 218 is modified to Phosphoserine. Disordered stretches follow at residues 263-331 (RSLR…PRKP) and 354-389 (HTSGPGVQSPGLATGESTEKPPQGEVAFPHHPRRSL). Residues 275 to 286 (PGCPEAQPPQGP) are compositionally biased toward pro residues. Over residues 287–306 (GPAAWEGLSGAATPAPTVRP) the composition is skewed to low complexity. Threonine 308 bears the Phosphothreonine mark. Lysine 330 participates in a covalent cross-link: Glycyl lysine isopeptide (Lys-Gly) (interchain with G-Cter in SUMO2). 3 consecutive C2H2-type zinc fingers follow at residues 332–359 (YTCEQCGRGFDWKSVFVIHHRTHTSGPG), 395–422 (YPCEECGCSFSWKSQLVIHRKSHTGQRR), and 423–450 (HFCSDCGRAFDWKSQLVIHRKGHRPEVP).

It belongs to the krueppel C2H2-type zinc-finger protein family.

It is found in the nucleus. Functionally, may be involved in transcriptional regulation. This Homo sapiens (Human) protein is Zinc finger protein 446 (ZNF446).